We begin with the raw amino-acid sequence, 64 residues long: Large ribosomal subunit protein bL35 (64 aa).

The disordered stretch occupies residues 22–44; it reads IMKQQAGMRHNLEVKSSKRKARL.

The protein belongs to the bacterial ribosomal protein bL35 family.

The sequence is that of Large ribosomal subunit protein bL35 from Clavibacter sepedonicus (Clavibacter michiganensis subsp. sepedonicus).